The sequence spans 223 residues: DnaJ homolog subfamily B member 9 (223 aa).

Residues 1–23 form the signal peptide; it reads MATPQSIFIFAICILMITELILA. Residues 26-90 enclose the J domain; the sequence is SYYDILGVPK…NRRKEYDTLG (65 aa). A divergent targeting domain region spans residues 91 to 223; that stretch reads HSAFTNGKGQ…VTTYTDCSGQ (133 aa). Position 133 is a phosphoserine (serine 133).

In terms of assembly, interacts with HSPA5/BiP; interaction is direct. Interacts with ERN1/IRE1 (via the luminal region). Interacts with DERL1.

It localises to the endoplasmic reticulum lumen. Co-chaperone for Hsp70 protein HSPA5/BiP that acts as a key repressor of the ERN1/IRE1-mediated unfolded protein response (UPR). J domain-containing co-chaperones stimulate the ATPase activity of Hsp70 proteins and are required for efficient substrate recognition by Hsp70 proteins. In the unstressed endoplasmic reticulum, interacts with the luminal region of ERN1/IRE1 and selectively recruits HSPA5/BiP: HSPA5/BiP disrupts the dimerization of the active ERN1/IRE1 luminal region, thereby inactivating ERN1/IRE1. Also involved in endoplasmic reticulum-associated degradation (ERAD) of misfolded proteins. Required for survival of B-cell progenitors and normal antibody production. This chain is DnaJ homolog subfamily B member 9, found in Pongo abelii (Sumatran orangutan).